The following is a 518-amino-acid chain: MSDYPPPNYPPPNHPQYQQQQDETYHVRPDMERQQDFGYYEKPTPSQNFDDSFKVEKPKFNDWPFAIFFWLVVAGFIAVAGITLNALRSTYGFQGGSIYGSGNTFTLNTNTIILFAFIIVMAFILSAAIIVFARLAPKAFIVTGVILNVVLGIGTAIFYFVEKYYSAAIVFLIFALFGAWCYWSSRHRIPLSATILTIVIDVMKMYPSTLIASFIGLIFSAAFSALFSIVIVATYVKYDPNSNNEACSVGGGSCSKGKLIGVLVFVFFAGYYISEVIRNVIHVVIAGIYGTWYYLANSDQGAPKHPALSSLKRALTYCFGSITFGSLIVSLIQLLRQFISILRSNFAADGNGWGVCGMIILDFFVGFIDWLVRYLNKYAYCYVALYGKSYIKSAKDTFDLIRFKGMDALINDMFINTALNLYSLFVAYLVALLAYLYLKFTKPEYNSGGAFYAPVIAFAFLIAGQINRISLTVIESGTATFFVALAKDPEIFQMTNRNRFDDIFRNYPQVLEKITSDH.

A compositionally biased stretch (pro residues) spans 1 to 14 (MSDYPPPNYPPPNH). The segment at 1 to 24 (MSDYPPPNYPPPNHPQYQQQQDET) is disordered. Topologically, residues 1–63 (MSDYPPPNYP…KVEKPKFNDW (63 aa)) are cytoplasmic. A helical transmembrane segment spans residues 64–84 (PFAIFFWLVVAGFIAVAGITL). Residues 85 to 111 (NALRSTYGFQGGSIYGSGNTFTLNTNT) lie on the Extracellular side of the membrane. The chain crosses the membrane as a helical span at residues 112–132 (IILFAFIIVMAFILSAAIIVF). Residues 133–139 (ARLAPKA) lie on the Cytoplasmic side of the membrane. The helical transmembrane segment at 140-160 (FIVTGVILNVVLGIGTAIFYF) threads the bilayer. The Extracellular segment spans residues 161-163 (VEK). Residues 164–184 (YYSAAIVFLIFALFGAWCYWS) traverse the membrane as a helical segment. Residues 185-210 (SRHRIPLSATILTIVIDVMKMYPSTL) are Cytoplasmic-facing. A helical membrane pass occupies residues 211–231 (IASFIGLIFSAAFSALFSIVI). At 232–256 (VATYVKYDPNSNNEACSVGGGSCSK) the chain is on the extracellular side. Residues 257–277 (GKLIGVLVFVFFAGYYISEVI) traverse the membrane as a helical segment. At 278-314 (RNVIHVVIAGIYGTWYYLANSDQGAPKHPALSSLKRA) the chain is on the cytoplasmic side. Residues 315 to 335 (LTYCFGSITFGSLIVSLIQLL) form a helical membrane-spanning segment. The Extracellular portion of the chain corresponds to 336 to 351 (RQFISILRSNFAADGN). The helical transmembrane segment at 352–372 (GWGVCGMIILDFFVGFIDWLV) threads the bilayer. Topologically, residues 373-417 (RYLNKYAYCYVALYGKSYIKSAKDTFDLIRFKGMDALINDMFINT) are cytoplasmic. A helical membrane pass occupies residues 418 to 438 (ALNLYSLFVAYLVALLAYLYL). Over 439–445 (KFTKPEY) the chain is Extracellular. The chain crosses the membrane as a helical span at residues 446–466 (NSGGAFYAPVIAFAFLIAGQI). Topologically, residues 467–518 (NRISLTVIESGTATFFVALAKDPEIFQMTNRNRFDDIFRNYPQVLEKITSDH) are cytoplasmic.

It belongs to the CTL (choline transporter-like) family.

The protein resides in the cell membrane. Probably involved in transport through the plasma membrane. The protein is Protein PNS1 (PNS1) of Candida albicans (strain SC5314 / ATCC MYA-2876) (Yeast).